The sequence spans 302 residues: uncharacterized protein (302 aa).

Positions 1-52 (MLKKLKVVRLLVNHLIYCPSIFMPYSKNMKKKIWNKTSLGALFMLFGTALTA) are cleaved as a signal peptide.

Belongs to the MG439/MG440 family.

This is an uncharacterized protein from Mycoplasma pneumoniae (strain ATCC 29342 / M129 / Subtype 1) (Mycoplasmoides pneumoniae).